The sequence spans 266 residues: Undecaprenyl-diphosphatase (266 aa).

Transmembrane regions (helical) follow at residues 38–58 (SDMF…IIYW), 80–100 (LIVA…VLHF), 108–128 (PIAW…WAAA), 136–156 (ITWL…IFPG), 176–196 (AAAT…ASGY), 217–237 (IAFV…LAYI), and 245–265 (FAVY…TGLI).

Belongs to the UppP family.

It is found in the cell inner membrane. It carries out the reaction di-trans,octa-cis-undecaprenyl diphosphate + H2O = di-trans,octa-cis-undecaprenyl phosphate + phosphate + H(+). Functionally, catalyzes the dephosphorylation of undecaprenyl diphosphate (UPP). Confers resistance to bacitracin. The protein is Undecaprenyl-diphosphatase of Rhizobium leguminosarum bv. trifolii (strain WSM2304).